Here is a 416-residue protein sequence, read N- to C-terminus: MFDTVCSLPLSSDLFSQAIHPTEPLVSIGLSSGHVQTFHLPAPSENGKAGYGHIDTVWRTRRHKGSCRCVGFGIDGETLYSAGTDGWVKAARTETGRVEWKFAVPRIGDKSGFQVDSPCLIHALSPQTLLLATDSGALHLFDLRDRSTEVSARPQQTHHPHDDYVSSLTPLPPSETSTSGYSKQWITTGGTTIAVTDLRRGILVRSEDQGEELISSSYVTGLKAGGTSKGEKLVVGGASGVLTLWEKGAWDDQDERIIVDRSLDGGESLEVIANVPDELGKGKVVAVGQSDGRVQFVQLGPNKVISELSHDDLEGVVGLGFDVQGRMISGGGTVVKVWHEAISDEEGNDDESDEEDIENGEGLGKKRKGGNGSSDEEEDSDDDMAGKDKGKRKKRKRGKGKDRSGGVHVMAFKGLD.

WD repeat units follow at residues 9–48 (PLSSDLFSQAIHPTEPLVSIGLSSGHVQTFHLPAPSENGK), 62–101 (RHKGSCRCVGFGIDGETLYSAGTDGWVKAARTETGRVEWK), and 112–151 (GFQVDSPCLIHALSPQTLLLATDSGALHLFDLRDRSTEVS). Residues 149-183 (EVSARPQQTHHPHDDYVSSLTPLPPSETSTSGYSK) are disordered. A compositionally biased stretch (low complexity) spans 166–179 (SSLTPLPPSETSTS). 3 WD repeats span residues 214–255 (ISSS…DQDE), 264–308 (DGGE…ISEL), and 309–348 (SHDDLEGVVGLGFDVQGRMISGGGTVVKVWHEAISDEEGN). 2 stretches are compositionally biased toward acidic residues: residues 343-359 (SDEEGNDDESDEEDIEN) and 374-383 (SDEEEDSDDD). Residues 343-416 (SDEEGNDDES…VHVMAFKGLD (74 aa)) form a disordered region. The span at 389–400 (KGKRKKRKRGKG) shows a compositional bias: basic residues.

The protein belongs to the WD repeat WDR55 family.

It is found in the nucleus. The protein resides in the nucleolus. This Coccidioides immitis (strain RS) (Valley fever fungus) protein is WD repeat-containing protein JIP5 (JIP5).